The following is a 720-amino-acid chain: MFALPVRKFHEPYYERKPSHAKKINGVYQTLTTAGMEVEDGIRKAKELLKENVNPELMRRALGIYLIHSRDAQRRKIVVPPLMSHVSFLSNRSIPPQTVSTTAGPTVVAGEVVTADTFQGPALLSYWREDYDLNDFHYYWHMMFPGTTVNVGGENIKLMDRPGEHFLQIVSQMVARYETEGLCWNLPLVRPWNQYDDILEHGYVPVPGLIEYYGGYPPFSSWYSVRNPDIPDLPQVDVSRKQMETWRDNIYEAIKNGYFWGKKQGTNAERTPLPLTPDNCMDLVGSVVDAEYLTLPPSPDGLSVDGDLYGNLHNYGHGNFAEISYQNYPTKAAQYGLMISNFGALRDPCFWPWHKHIQYFRRLASAKFPQDITAHRAHVRLSSLVICPQRKSTSISREDGITAFLGPPALNLLESKAKIGHEPYQWSVDIQSTRSSPPSEDSPQALTLRLFIAAGDLVNDYHSWIEMDRVTVHLTSKSTLTKVRLDTDSSIARKMGSYSELDPKSTSPWDRCRWPQHMMLPVGKVEGMPFVAFCMATDDTTAPRTRVPNSNTFEAIQSDQRLSDPLGMGYPFNRAWVQDVMDNAGKASIRQIISDAQTYPFMTTTTFRIFRATKMFQDSILNPYIPPASVTWFNTIKDYFLESDKTCMLYAYGYDLGNYDHVRLHSGAILDATSSKRMPLQMSPWSQENPDPNHPLWTPEMCDTFRAWMLNGCPKGTDSA.

Positions 137, 141, and 313 each coordinate Cu cation.

It belongs to the tyrosinase family. The cofactor is Cu(2+).

The enzyme catalyses (-)-cyclopenine = viridicatin + methyl isocyanate + H(+). The catalysed reaction is (-)-4'-methoxycyclopenine = 4'-methoxyviridicatin + methyl isocyanate + H(+). Its pathway is secondary metabolite biosynthesis. It participates in alkaloid biosynthesis. It functions in the pathway mycotoxin biosynthesis. Cyclopenase; part of the gene cluster that mediates the biosynthesis of penigequinolones, potent insecticidal alkaloids that contain a highly modified 10-carbon prenyl group. The first stage is catalyzed by the nonribosomal peptide synthetase penN that condenses anthranilic acid and O-methyl-L-tyrosine to produce 4'-methoxycyclopeptin. 4'-methoxycyclopeptin is then converted to 4'-methoxydehydrocyclopeptin by the ketoglutarate-dependent dioxygenase penM through dehydrogenation to form a double bond between C-alpha and C-beta of the O-methyltyrosine side chain. PenM also converts its first product methoxydehydrocyclopeptin to 4'-methoxycyclopenin. The following conversion of 4'methoxycyclopenin into 4'-methoxyviridicatin is catalyzed by the cyclopenase penL. 4'-methoxyviridicatin is the precursor of quinolone natural products, and is further converted to quinolinone B. The prenyltransferase penI then catalyzes the canonical Friedel-Crafts alkylation of quinolinone B with dimethylallyl cation to yield dimethylallyl quinolone, which is subjected to FAD-dependent dehydrogenation by the FAD-linked oxidoreductase penH to yield conjugated aryl diene. The delta(3') double bond then serves as the site of the second alkylation with DMAPP catalyzed by the prenyltransferase penG to yield a carbenium ion intermediate, which can be attacked by H(2)O to yield a styrenyl quinolone containing a C3'-hydroxyprenyl chain, or undergo cyclization to yield yaequinolones J1 and J2. The conversion of the styrenyl quinolone into the tetrahydrofuran-containing yaequinolone C is performed by the FAD-dependent monooxygenase penE and involves epoxidation of the terminal C7'-C8' olefin, followed by epoxide ring opening initiated by the C3' hydroxyl group. The predicted cysteine hydrolase penJ acts as an epoxide hydrolase that enhances the rate of the 5-exo-tet cyclization step, increasing the yield of yaequinolone C. PenF catalyzes the cationic rearrangement of the epoxide formed by penE (before ring opening to produce yaequinolone C) into yaequinolone D. Finally, the short-chain dehydrogenase/reductase (SDR)-like reductase penD, catalyzes both the dehydration of yaequinolone D and the reduction of the resulting oxonium to yield penigequinolone. This chain is Cyclopenase penL, found in Penicillium thymicola.